Reading from the N-terminus, the 642-residue chain is Probable glutamate--tRNA ligase, cytoplasmic (642 aa).

Position 152–154 (152–154 (RFP)) interacts with L-glutamate. Residues 157–166 (PNGRLHIGHA) carry the 'HIGH' region motif. ATP is bound at residue H162. L-glutamate-binding positions include D188, 326–330 (YDFAC), and R344. Residues E347 and 382-386 (VLSKR) each bind ATP. A 'KMSKS' region motif is present at residues 382 to 386 (VLSKR).

The protein belongs to the class-I aminoacyl-tRNA synthetase family. Glutamate--tRNA ligase type 2 subfamily.

It localises to the cytoplasm. The catalysed reaction is tRNA(Glu) + L-glutamate + ATP = L-glutamyl-tRNA(Glu) + AMP + diphosphate. The protein is Probable glutamate--tRNA ligase, cytoplasmic of Encephalitozoon cuniculi (strain GB-M1) (Microsporidian parasite).